Here is a 395-residue protein sequence, read N- to C-terminus: Elongation factor Tu (395 aa).

Positions 10–204 (KPHVNVGTIG…AVDAYIDTPL (195 aa)) constitute a tr-type G domain. Positions 19–26 (GHVDHGKT) are G1. Position 19–26 (19–26 (GHVDHGKT)) interacts with GTP. Residue T26 coordinates Mg(2+). Residues 60–64 (GITIN) form a G2 region. Residues 81–84 (DCPG) are G3. Residues 81-85 (DCPGH) and 136-139 (NKAD) contribute to the GTP site. The interval 136 to 139 (NKAD) is G4. Positions 174-176 (SAL) are G5.

Belongs to the TRAFAC class translation factor GTPase superfamily. Classic translation factor GTPase family. EF-Tu/EF-1A subfamily. In terms of assembly, monomer.

The protein localises to the cytoplasm. The catalysed reaction is GTP + H2O = GDP + phosphate + H(+). Its function is as follows. GTP hydrolase that promotes the GTP-dependent binding of aminoacyl-tRNA to the A-site of ribosomes during protein biosynthesis. This chain is Elongation factor Tu, found in Acholeplasma laidlawii (strain PG-8A).